Here is a 224-residue protein sequence, read N- to C-terminus: MANSGLQLLGYFLALGGWVGIIASTALPQWKQSSYAGDAIITAVGLYEGLWMSCASQSTGQVQCKLYDSLLALDGHIQSARALMVVAVLLGFVAMVLSVVGMKCTRVGDSNPTAKGRVAISGGALFLLAGLCTLTAVSWYATLVTQEFFNPSTPVNARYEFGPALFVGWASAGLAILGGSFLCCTCPEPERANSIPQPYRSGPSTAAREPVVKLSTSVKGPLGV.

Residues 1-7 (MANSGLQ) are Cytoplasmic-facing. A helical transmembrane segment spans residues 8 to 28 (LLGYFLALGGWVGIIASTALP). The Extracellular segment spans residues 29–81 (QWKQSSYAGDAIITAVGLYEGLWMSCASQSTGQVQCKLYDSLLALDGHIQSAR). Cys-54 and Cys-64 are oxidised to a cystine. A helical membrane pass occupies residues 82–102 (ALMVVAVLLGFVAMVLSVVGM). At 103 to 117 (KCTRVGDSNPTAKGR) the chain is on the cytoplasmic side. Residues 118–138 (VAISGGALFLLAGLCTLTAVS) traverse the membrane as a helical segment. The Extracellular segment spans residues 139-160 (WYATLVTQEFFNPSTPVNARYE). Residues 161 to 181 (FGPALFVGWASAGLAILGGSF) traverse the membrane as a helical segment. The Cytoplasmic portion of the chain corresponds to 182–224 (LCCTCPEPERANSIPQPYRSGPSTAAREPVVKLSTSVKGPLGV).

It belongs to the claudin family. Can form homo- and heteropolymeric tight junction strands. Interacts with other claudins including CLDN3, CLDN10, CLDN16 and CLDN18 with highest affinity for CLDN16. Interacts (via PDZ-binding motif TRV) with TJP1 (via PDZ domain).

The protein resides in the cell junction. Its subcellular location is the tight junction. It is found in the cell membrane. It carries out the reaction Mg(2+)(in) = Mg(2+)(out). The enzyme catalyses Ca(2+)(in) = Ca(2+)(out). It catalyses the reaction Na(+)(in) = Na(+)(out). The catalysed reaction is K(+)(in) = K(+)(out). It carries out the reaction Rb(+)(in) = Rb(+)(out). The enzyme catalyses Cs(+)(in) = Cs(+)(out). It catalyses the reaction Li(+)(in) = Li(+)(out). In terms of biological role, forms paracellular channels: coassembles with CLDN16 into tight junction strands with cation-selective channels through the strands, conveying epithelial permeability in a process known as paracellular tight junction permeability. Involved in the maintenance of ion gradients along the nephron. In the thick ascending limb (TAL) of Henle's loop, facilitates sodium paracellular permeability from the interstitial compartment to the lumen, contributing to the lumen-positive transepithelial potential that drives paracellular magnesium and calcium reabsorption. Forms paracellular barriers on its own. In the peripheral nervous system, represents a major constituent of the tight junctions in Schwann cells and contributes to electrical sealing. During retinal neurogenesis, may regulate the barrier properties of tight junctions in retinal pigment epithelium, required for proper retinal tissue differentiation and vision. The protein is Claudin-19 of Rattus norvegicus (Rat).